The following is a 505-amino-acid chain: DEAD-box ATP-dependent RNA helicase 8 (505 aa).

Residues 1 to 85 are disordered; that stretch reads MNNRGRYPPG…GQIPGGNSNG (85 aa). Residues 20-31 are compositionally biased toward polar residues; sequence PNPNYQSRSGYQ. Over residues 43–71 the composition is skewed to low complexity; the sequence is NYAQNHQQQFQQAPSQPHQYQQQQQQQQQ. The short motif at 131-159 is the Q motif element; that stretch reads NEFEDYFLKRELLMGIYEKGFERPSPIQE. Residues 162-332 enclose the Helicase ATP-binding domain; that stretch reads IPIALTGRDI…DRFLTNPYVI (171 aa). 175–182 is an ATP binding site; it reads AKNGTGKT. Position 237 is a phosphothreonine (threonine 237). Positions 280–283 match the DEAD box motif; that stretch reads DEAD. The 161-residue stretch at 342–502 folds into the Helicase C-terminal domain; the sequence is GITQFYAFVE…QIPPHIDQAI (161 aa).

This sequence belongs to the DEAD box helicase family. DDX6/DHH1 subfamily.

It is found in the cytoplasm. Its subcellular location is the P-body. The catalysed reaction is ATP + H2O = ADP + phosphate + H(+). In terms of biological role, ATP-dependent RNA helicase involved in mRNA turnover, and more specifically in mRNA decapping. The polypeptide is DEAD-box ATP-dependent RNA helicase 8 (RH8) (Arabidopsis thaliana (Mouse-ear cress)).